We begin with the raw amino-acid sequence, 428 residues long: MFVDQVKIYVKGGDGGNGMVAFRREKYVPKGGPAGGDGGKGGDVVFVVDEGLRTLMDFRYQRHFKAPRGEHGMSKNQHGKNAEDLIVKVPPGTVVIDDETKEVIADLTEHGQRFVVAKGGRGGRGNTRFATASNPAPEIAENGEPGQERYVTLELKLLADVGLVGFPSVGKSTLLSVVSAAKPKIADYHFTTIVPNLGVVETEDGRSFVMADLPGLIEGAHQGVGLGHQFLRHIERTRVIVHVIDMAAIEGRDPYEDYVVINEELKQYNLRLTERPQIIVANKMDMPNAEEHLQQFKQKLNEDVPIFPISAVTRQGIRELLFAIADLLETTPEFPLYPQEEEAIHRVVYKLEKEEAPFHITRDDDGTFILSGEKIEKLFKMTDFSREESVRRFARQLRSLGVDDALRARGAKDGDIVKLLNYEFEFVD.

Residues 1 to 158 (MFVDQVKIYV…RYVTLELKLL (158 aa)) enclose the Obg domain. The region spanning 159–329 (ADVGLVGFPS…LLFAIADLLE (171 aa)) is the OBG-type G domain. GTP-binding positions include 165-172 (GFPSVGKS), 190-194 (FTTIV), 212-215 (DLPG), 282-285 (NKMD), and 310-312 (SAV). Mg(2+) contacts are provided by S172 and T192. The region spanning 350–428 (KLEKEEAPFH…LLNYEFEFVD (79 aa)) is the OCT domain.

The protein belongs to the TRAFAC class OBG-HflX-like GTPase superfamily. OBG GTPase family. As to quaternary structure, monomer. Mg(2+) serves as cofactor.

It is found in the cytoplasm. Functionally, an essential GTPase which binds GTP, GDP and possibly (p)ppGpp with moderate affinity, with high nucleotide exchange rates and a fairly low GTP hydrolysis rate. Plays a role in control of the cell cycle, stress response, ribosome biogenesis and in those bacteria that undergo differentiation, in morphogenesis control. The protein is GTPase Obg of Anoxybacillus flavithermus (strain DSM 21510 / WK1).